A 361-amino-acid chain; its full sequence is G2/mitotic-specific cyclin-B (361 aa).

Belongs to the cyclin family. Cyclin AB subfamily.

Functionally, essential for the control of the cell cycle at the G2/M (mitosis) transition. Interacts with the CDC2 protein kinase to form MPF. G2/M cyclins accumulate steadily during G2 and are abruptly destroyed at mitosis. The chain is G2/mitotic-specific cyclin-B from Hydra vulgaris (Hydra).